The chain runs to 282 residues: Protoheme IX farnesyltransferase (282 aa).

9 consecutive transmembrane segments (helical) span residues 9-29, 39-59, 79-99, 102-122, 139-159, 165-185, 210-230, 231-251, and 261-281; these read LAKP…FLLA, LPLF…GCVF, LVTG…LLIL, LVLY…GFIV, VLGG…VVNI, LALF…IAML, IMLF…VLGS, ADLF…YKSI, and VFAK…CLTM.

Belongs to the UbiA prenyltransferase family. Protoheme IX farnesyltransferase subfamily.

The protein localises to the cell inner membrane. It carries out the reaction heme b + (2E,6E)-farnesyl diphosphate + H2O = Fe(II)-heme o + diphosphate. It functions in the pathway porphyrin-containing compound metabolism; heme O biosynthesis; heme O from protoheme: step 1/1. Functionally, converts heme B (protoheme IX) to heme O by substitution of the vinyl group on carbon 2 of heme B porphyrin ring with a hydroxyethyl farnesyl side group. The sequence is that of Protoheme IX farnesyltransferase from Francisella tularensis subsp. holarctica (strain LVS).